The following is a 557-amino-acid chain: Resveratrol cleavage oxygenase 1 (557 aa).

The disordered stretch occupies residues 1–46 (MAILNDPPSSTTILSLHTPDVPPPSKPTPATTSHPQDSRNPRNLTS). Positions 144 and 177 each coordinate piceatannol. 2 residues coordinate trans-resveratrol: tyrosine 144 and lysine 177. Positions 211, 262, and 334 each coordinate Fe cation. Position 404 (glutamate 404) interacts with piceatannol. A trans-resveratrol-binding site is contributed by glutamate 404. Histidine 523 is a binding site for Fe cation.

The protein belongs to the carotenoid oxygenase family. It depends on Fe(2+) as a cofactor.

It carries out the reaction trans-resveratrol + O2 = 3,5-dihydroxybenzaldehyde + 4-hydroxybenzaldehyde. The enzyme catalyses piceatannol + O2 = 3,5-dihydroxybenzaldehyde + 3,4-dihydroxybenzaldehyde. Functionally, dioxygenase that cleaves the interphenyl C-alpha-C-beta double bond of resveratrol to yield 3,5-dihydroxybenzaldehyde and 4-hydroxybenzaldehyde. Also cleaves piceatannol, a compound that differs from resveratrol only in the occurrence of an additional hydroxyl group, which leads to the production of 3,4-dihydroxybenzaldehyde and 3,5-hydroxybenzaldehyde. This chain is Resveratrol cleavage oxygenase 1, found in Botryotinia fuckeliana (strain B05.10) (Noble rot fungus).